A 122-amino-acid polypeptide reads, in one-letter code: Basic phospholipase A2 homolog myotoxin II (122 aa).

Intrachain disulfides connect cysteine 26–cysteine 116, cysteine 28–cysteine 44, cysteine 43–cysteine 95, cysteine 49–cysteine 122, cysteine 50–cysteine 88, cysteine 57–cysteine 81, and cysteine 75–cysteine 86. Residues 105-118 (KKYRYNYLKPFCKK) form an important for membrane-damaging activities in eukaryotes and bacteria; heparin-binding region.

This sequence belongs to the phospholipase A2 family. Group II subfamily. K49 sub-subfamily. In terms of assembly, homodimer; non-covalently linked (probable alternative/compact dimer conformation). Expressed by the venom gland.

It localises to the secreted. Myotoxic activity is inhibited by suramin and rosmarinic acid. Cytotoxic and myotoxic activities are inhibited by pre-incubation with varespladib. Suramin inhibits this myotoxin by (i) direct blockage of the MDoS and MDiS, preventing the toxin/membrane interaction and disruption and (ii) formation of an oligomeric complex, resulting in a tetrameric configuration for which both MDoS and MDiS becomes physically inaccessible, thus avoiding any possibility of toxin-membrane interaction or disruption. Heparin completely inhibits the cytotoxic and bactericidal activities, but only partially the myotoxic, edema-inducing and lethal effects. Its function is as follows. Snake venom phospholipase A2 (PLA2) homolog that lacks enzymatic activity. Shows high myotoxin activities. Also shows neurotoxicity, since it induces muscle paralysis when tested on mouse phrenic-diaphragm preparations. Displays edema-inducing activities. Also displays antimicrobial activity against E.coli and C.albicans, as well as antitumoral activity against some human and mice cell lines. In addition, it is effective as parasiticidal agent against Leishmania sp. and S.mansoni. It also disrupts negatively charged liposomes in a dose- and temperature-dependent manner and shows toxicity by intraperitoneal route. In contrast to other phospholipase A2-like toxins, this myotoxin does not require fatty acid binding to be active. The chain is Basic phospholipase A2 homolog myotoxin II from Bothrops moojeni (Lance-headed viper).